The sequence spans 512 residues: Maturase K (512 aa).

It belongs to the intron maturase 2 family. MatK subfamily.

It localises to the plastid. It is found in the chloroplast. In terms of biological role, usually encoded in the trnK tRNA gene intron. Probably assists in splicing its own and other chloroplast group II introns. The chain is Maturase K from Alisma canaliculatum (Water plantain).